The sequence spans 551 residues: Cleavage and polyadenylation specificity factor subunit 6 (551 aa).

In terms of domain architecture, RRM spans I81–K161. The residue at position 157 (T157) is a Phosphothreonine. Over residues M169–M180 the composition is skewed to polar residues. Disordered stretches follow at residues M169–S410 and L477–R551. Composition is skewed to pro residues over residues T237–G265, G285–A366, and G377–P388. Composition is skewed to basic and acidic residues over residues P389–A404 and S489–R503. S494, S500, S511, S513, and S525 each carry phosphoserine. Basic residues predominate over residues E504–R514. Residues D515–R551 show a composition bias toward basic and acidic residues.

Belongs to the RRM CPSF6/7 family. Component of the cleavage factor Im (CFIm) complex.

The protein resides in the nucleus. It is found in the nucleoplasm. Its subcellular location is the nucleus speckle. The protein localises to the cytoplasm. Its function is as follows. Component of the cleavage factor Im (CFIm) complex that functions as an activator of the pre-mRNA 3'-end cleavage and polyadenylation processing required for the maturation of pre-mRNA into functional mRNAs. CFIm contributes to the recruitment of multiprotein complexes on specific sequences on the pre-mRNA 3'-end, so called cleavage and polyadenylation signals (pA signals). Most pre-mRNAs contain multiple pA signals, resulting in alternative cleavage and polyadenylation (APA) producing mRNAs with variable 3'-end formation. The CFIm complex acts as a key regulator of cleavage and polyadenylation site choice during APA through its binding to 5'-UGUA-3' elements localized in the 3'-untranslated region (UTR) for a huge number of pre-mRNAs. Plays a role in mRNA export. This is Cleavage and polyadenylation specificity factor subunit 6 from Gallus gallus (Chicken).